We begin with the raw amino-acid sequence, 67 residues long: Peptide Hp1239 (67 aa).

A signal peptide spans 1-23 (MKTQFTVLLITLVLFQMLSQSEA). Residue F36 is modified to Phenylalanine amide. Residues 40–67 (GLSDLSDLDELFDGEITKADLDLLREIM) constitute a propeptide that is removed on maturation.

Belongs to the non-disulfide-bridged peptide (NDBP) superfamily. Short antimicrobial peptide (group 4) family. Expressed by the venom gland.

It localises to the secreted. Its subcellular location is the target cell membrane. Its function is as follows. Amphipathic peptide with antibacterial activities. Shows antiviral activities against the herpes simplex virus type-1. It potently inhibits the initial infection by provoking the rupture of viral envelop and the dissociation of proteins from the virions (EC(50) is 0.41 uM). It also effectively inhibits viral attachment (EC(50) is 5.73 uM), viral entry (EC(50) is 4.32 uM) and viral proliferation after infection (EC(50) is 8.41 uM). Morever, it enters mammalian tested cells (Vero) and reduces the intracellular infectivity. This chain is Peptide Hp1239, found in Heterometrus petersii (Asian forest scorpion).